A 171-amino-acid polypeptide reads, in one-letter code: Vimentin-type intermediate filament-associated coiled-coil protein (171 aa).

The stretch at 7–98 (LQIREANAHL…QRDQMIQELQ (92 aa)) forms a coiled coil. Residues 126–171 (ELGPLPSSHSHGAQLLPDGPGPPLGNSMREEEGQDDQQPAVFGTTV) form a disordered region.

Expressed in brain, heart, kidney, liver, lung, skeletal muscle, spleen and testis. Within the kidney expression is pronounced within glomeruli.

Its subcellular location is the cytoplasm. This is Vimentin-type intermediate filament-associated coiled-coil protein (Vmac) from Rattus norvegicus (Rat).